A 601-amino-acid chain; its full sequence is Glutamyl-tRNA(Gln) amidotransferase subunit B, mitochondrial (601 aa).

A mitochondrion-targeting transit peptide spans 1 to 52; the sequence is MLQQWLRQSPGAARFLRGSCCRGPQSGSLRHSPLPTAPHRCIRSLQTSATES.

Belongs to the GatB/GatE family. GatB subfamily. In terms of assembly, subunit of the heterotrimeric GatCAB amidotransferase (AdT) complex, composed of A, B and C subunits.

It is found in the mitochondrion. It catalyses the reaction L-glutamyl-tRNA(Gln) + L-glutamine + ATP + H2O = L-glutaminyl-tRNA(Gln) + L-glutamate + ADP + phosphate + H(+). Allows the formation of correctly charged Gln-tRNA(Gln) through the transamidation of misacylated Glu-tRNA(Gln) in the mitochondria. The reaction takes place in the presence of glutamine and ATP through an activated gamma-phospho-Glu-tRNA(Gln). In Neosartorya fischeri (strain ATCC 1020 / DSM 3700 / CBS 544.65 / FGSC A1164 / JCM 1740 / NRRL 181 / WB 181) (Aspergillus fischerianus), this protein is Glutamyl-tRNA(Gln) amidotransferase subunit B, mitochondrial.